Here is a 63-residue protein sequence, read N- to C-terminus: Beta-defensin 6 (63 aa).

A signal peptide spans 1–22; it reads MKIHYLLFAFILVMLSPLAAFS. The residue at position 23 (Q23) is a Pyrrolidone carboxylic acid. 3 cysteine pairs are disulfide-bonded: C31–C59, C38–C52, and C42–C60.

The protein belongs to the beta-defensin family. Predominantly expressed in skeletal muscle, also expressed in esophagus, tongue, and trachea. Also expressed in lung when induced by lipopolysaccharide.

It localises to the secreted. Functionally, has potent antibacterial activity against E.coli (ATCC 25922). This chain is Beta-defensin 6 (Defb6), found in Mus musculus (Mouse).